A 109-amino-acid polypeptide reads, in one-letter code: Parvalbumin alpha (109 aa).

EF-hand domains are found at residues 38-73 and 77-109; these read KSKEIMQKVFHVLDQDQSGFIEKEELCLILKGFTPE and LSDKETTALLAAGDKDGDGKIGVDEFVTLVSES. 11 residues coordinate Ca(2+): Asp51, Asp53, Ser55, Phe57, Glu59, Glu62, Asp90, Asp92, Asp94, Lys96, and Glu101.

This sequence belongs to the parvalbumin family.

Functionally, in muscle, parvalbumin is thought to be involved in relaxation after contraction. It binds two calcium ions. The chain is Parvalbumin alpha from Pelophylax lessonae (Pool frog).